Consider the following 104-residue polypeptide: ESAT-6-like protein (104 aa).

Residues 12–43 (MAQAAQDIEQSANAIRGMQNQLASAKDQLRSH) adopt a coiled-coil conformation.

Belongs to the WXG100 family. CFP-10 subfamily. As to quaternary structure, in isolation forms a homodimer. Forms a tight 1:1 complex with EsxA. Forms a complex with EsxA and EccC, probably wholly mediated by EsxB; binds in a pocket in the third FtsK (ATPase) domain of EccC (residues 1163-1208).

It is found in the secreted. May help regulate assembly and function of the type VII secretion system (T7SS). Binds to EccC and induces its multimerization. May serve as a chaperone for EsxA. This chain is ESAT-6-like protein, found in Thermomonospora curvata (strain ATCC 19995 / DSM 43183 / JCM 3096 / KCTC 9072 / NBRC 15933 / NCIMB 10081 / Henssen B9).